We begin with the raw amino-acid sequence, 471 residues long: Probable nucleoredoxin 3 (471 aa).

Thioredoxin domains are found at residues 15–173 (VSIP…ARRQ) and 179–334 (QLLG…KERD).

The protein belongs to the nucleoredoxin family.

It catalyses the reaction [protein]-dithiol + NAD(+) = [protein]-disulfide + NADH + H(+). It carries out the reaction [protein]-dithiol + NADP(+) = [protein]-disulfide + NADPH + H(+). In terms of biological role, probable thiol-disulfide oxidoreductase that may participate in various redox reactions. This Oryza sativa subsp. japonica (Rice) protein is Probable nucleoredoxin 3.